Reading from the N-terminus, the 1416-residue chain is Isonitrile lipopeptide synthase (1416 aa).

A coiled-coil region spans residues 188–215 (LRETAKVAEALRRQADAVQRELTAEAGQ). Residues 965–1028 (RVWSRHLGRP…NLVCDLGSNP (64 aa)) enclose the Carrier domain. The residue at position 988 (S988) is an O-(pantetheine 4'-phosphoryl)serine.

It belongs to the ATP-dependent AMP-binding enzyme family. Requires pantetheine 4'-phosphate as cofactor.

The enzyme catalyses 2 a (3R)-3-isocyanyl-fatty acyl-[ACP] + L-lysine + ATP + 2 NADPH = an isonitrile lipopeptide + 2 holo-[ACP] + AMP + diphosphate + 2 NADP(+). Functionally, nonribosomal peptide synthetase (NRPS) involved in the biosynthesis of a unique class of isonitrile lipopeptides (INLPs) that seem to play a role in metal acquisition in M.marinum. Catalyzes the final step in the pathway, i.e. the condensation of a (3R)-3-isocyanyl-fatty acyl-[ACP] to both amino groups of a lysine, producing isonitrile lipopeptides. The chain is Isonitrile lipopeptide synthase from Mycobacterium marinum (strain ATCC BAA-535 / M).